Here is a 279-residue protein sequence, read N- to C-terminus: NH(3)-dependent NAD(+) synthetase (279 aa).

46–53 (GVSGGQDS) serves as a coordination point for ATP. D52 serves as a coordination point for Mg(2+). R139 contributes to the deamido-NAD(+) binding site. ATP is bound at residue T159. E164 contacts Mg(2+). Residues K172 and D179 each contribute to the deamido-NAD(+) site. ATP-binding residues include K188 and T210. 259 to 260 (HK) lines the deamido-NAD(+) pocket.

The protein belongs to the NAD synthetase family. Homodimer.

The catalysed reaction is deamido-NAD(+) + NH4(+) + ATP = AMP + diphosphate + NAD(+) + H(+). It functions in the pathway cofactor biosynthesis; NAD(+) biosynthesis; NAD(+) from deamido-NAD(+) (ammonia route): step 1/1. Catalyzes the ATP-dependent amidation of deamido-NAD to form NAD. Uses ammonia as a nitrogen source. In Leifsonia xyli subsp. xyli (strain CTCB07), this protein is NH(3)-dependent NAD(+) synthetase.